The sequence spans 793 residues: Signal transducer and activator of transcription 5A (793 aa).

Residue Y90 is modified to Phosphotyrosine. Phosphoserine is present on S128. An SH2 domain is found at W589–V686. 2 positions are modified to phosphotyrosine: Y682 and Y694. A Phosphoserine modification is found at S779.

The protein belongs to the transcription factor STAT family. Forms a homodimer or a heterodimer with a related family member. Interacts with NCOA1 and SOCS7. Binds NR3C1. Interacts with ERBB4. Interacts with EBF4. Interacts with CD69. ISGylated. Post-translationally, tyrosine phosphorylated in response to KITLG/SCF, IL2, IL3, IL7, IL15, CSF2/GMCSF, GH1, PRL, EPO and THPO. Activated KIT promotes phosphorylation on tyrosine residues and subsequent translocation to the nucleus. Tyrosine phosphorylated in response to constitutively activated FGFR1, FGFR2, FGFR3 and FGFR4. Tyrosine phosphorylation is required for DNA-binding activity and dimerization. Serine phosphorylation is also required for maximal transcriptional activity. Tyrosine phosphorylated in response to signaling via activated FLT3; wild-type FLT3 results in much weaker phosphorylation than constitutively activated mutant FLT3. Alternatively, can be phosphorylated by JAK2 at Tyr-694. In terms of tissue distribution, in the virgin, found in most tissues except brain and muscle. During lactation, abundantly found in mammary tissue, as well as in other secretory organs such as salivary gland and seminal vesicle.

The protein localises to the cytoplasm. It is found in the nucleus. Carries out a dual function: signal transduction and activation of transcription. Mediates cellular responses to the cytokine KITLG/SCF and other growth factors. May mediate cellular responses to activated FGFR1, FGFR2, FGFR3 and FGFR4. Binds to the GAS element and activates PRL-induced transcription. Regulates the expression of milk proteins during lactation. This is Signal transducer and activator of transcription 5A (Stat5a) from Mus musculus (Mouse).